The chain runs to 277 residues: NADPH-dependent 7-cyano-7-deazaguanine reductase (277 aa).

Residue 83–85 participates in substrate binding; the sequence is VES. 85-86 contributes to the NADPH binding site; that stretch reads SK. Catalysis depends on cysteine 184, which acts as the Thioimide intermediate. Residue aspartate 191 is the Proton donor of the active site. Residue 223–224 coordinates substrate; sequence HE. 252–253 contacts NADPH; that stretch reads RG.

This sequence belongs to the GTP cyclohydrolase I family. QueF type 2 subfamily. As to quaternary structure, homodimer.

It is found in the cytoplasm. The catalysed reaction is 7-aminomethyl-7-carbaguanine + 2 NADP(+) = 7-cyano-7-deazaguanine + 2 NADPH + 3 H(+). Its pathway is tRNA modification; tRNA-queuosine biosynthesis. Catalyzes the NADPH-dependent reduction of 7-cyano-7-deazaguanine (preQ0) to 7-aminomethyl-7-deazaguanine (preQ1). The protein is NADPH-dependent 7-cyano-7-deazaguanine reductase of Cupriavidus taiwanensis (strain DSM 17343 / BCRC 17206 / CCUG 44338 / CIP 107171 / LMG 19424 / R1) (Ralstonia taiwanensis (strain LMG 19424)).